Here is a 303-residue protein sequence, read N- to C-terminus: E3 ubiquitin-protein ligase CHIP (303 aa).

Over residues 1 to 10 (MKGKEEKEGG) the composition is skewed to basic and acidic residues. The disordered stretch occupies residues 1–30 (MKGKEEKEGGARLGAGGGSPEKSPSAQELK). A Glycyl lysine isopeptide (Lys-Gly) (interchain with G-Cter in ubiquitin) cross-link involves residue K2. S19 is modified (phosphoserine). K22 participates in a covalent cross-link: Glycyl lysine isopeptide (Lys-Gly) (interchain with G-Cter in ubiquitin). 2 positions are modified to phosphoserine: S23 and S25. TPR repeat units follow at residues 26 to 59 (AQELKEQGNRLFVGRKYPEAAACYGRAITRNPLV), 60 to 93 (AVYYTNRALCYLKMQQHEQALADCRRALELDGQS), and 95 to 127 (KAHFFLGQCQLEMESYDEAIANLQRAYSLAKEQ). The required for interaction with MAPK7 stretch occupies residues 101 to 200 (GQCQLEMESY…SHVRAQQACI (100 aa)). The tract at residues 142–196 (AKKKRWNSIEERRIHQESELHSYLSRLIAAERERELEECQRNHEGDEDDSHVRAQ) is required for interaction with and ubiquitination of MYOCD. Residues 143–197 (KKKRWNSIEERRIHQESELHSYLSRLIAAERERELEECQRNHEGDEDDSHVRAQQ) form a required for interaction with FOXO1 region. A required for ubiquitination of FOXO1 region spans residues 143–303 (KKKRWNSIEE…ISENGWVEDY (161 aa)). S149 is modified (phosphoserine). Residues K221 and K255 each participate in a glycyl lysine isopeptide (Lys-Gly) (interchain with G-Cter in ubiquitin) cross-link. The U-box domain maps to 226-300 (DIPDYLCGKI…DAFISENGWV (75 aa)). S273 carries the phosphoserine modification.

In terms of assembly, homodimer. Interacts with BAG2. Interacts with E2 ubiquitin conjugating enzymes UBE2D1, UBE2D2 and UBE2D3. Detected in a ternary complex containing STUB1, HSPA1A and HSPBP1. Part of a complex composed of STUB1/CHIP, VCP/p97, CHRNA3, and UBXN2A that modulates the ubiquitination and endoplasmic reticulum-associated degradation (ERAD) of CHRNA3. Within the complex UBXN2A acts as a scaffold protein required for the interaction of CHRNA3 with VCP/p97, this interaction also inhibits CHRNA3 ubiquitination by STUB1/CHIP and subsequently ERAD. Interacts with MKKS. Interacts with DNAAF4. Interacts (when monoubiquitinated) with ATXN3. Interacts with UBE2W. Interacts (via the U-box domain) with the UBE2V2-UBE2N heterodimer; the complex has a specific 'Lys-63'-linked polyubiquitination activity. Interacts with DNAJB6. Interacts with FLCN. Interacts with HSP90AA1. Interacts with HSP90. Interacts with UBE2N and UBE2V1. Interacts (via TPR repeats) with HSPA8 (via C-terminus). Interacts (via TPR repeats) with HSPA1A (via C-terminus). Interacts with the non-acetylated form of HSPA1A and HSPA1B. Interacts with SMAD3 and HSP90AB1. Interacts with UBE4B. Interacts with PRMT5. Interacts with MYOCD (via C-terminus). Interacts with FOXO1 (when phosphorylated on 'Ser-256'). Interacts with MAPK7/ERK5; the interaction is enhanced in the presence of IGF1 or MAP2K5 and promotes STUB1/CHIP E3 ligase activity. Interacts with and ubiquitinates ESR1; the interaction is promoted in the absence of estradiol (17-beta-estradiol/E2). Interacts with ESR2. Interacts with and ubiquitinates NFATC3; HSPA1A/HSP70 is required as a co-chaperone. In macrophages, interacts with PAQR3; the interaction promotes PPARG poylubiquitination and STUB1-mediated degradation. Component of the chaperone-assisted selective autophagy (CASA) complex consisting of BAG3, HSPA8/HSC70, HSPB8 and STUB1/CHIP. In terms of processing, monoubiquitinated at Lys-2 following cell stress by UBE2W, promoting the interaction with ATXN3. Auto-ubiquitinated; mediated by UBE2D1 and UBE2D2 and enhanced in the presence of MAP2K5. Expressed in differentiated myotubes (at protein level). Highly expressed in skeletal muscle, heart, pancreas, brain and placenta. Detected in kidney, liver and lung.

Its subcellular location is the cytoplasm. It localises to the nucleus. The protein resides in the mitochondrion. The catalysed reaction is S-ubiquitinyl-[E2 ubiquitin-conjugating enzyme]-L-cysteine + [acceptor protein]-L-lysine = [E2 ubiquitin-conjugating enzyme]-L-cysteine + N(6)-ubiquitinyl-[acceptor protein]-L-lysine.. It functions in the pathway protein modification; protein ubiquitination. E3 ubiquitin-protein ligase which targets misfolded chaperone substrates towards proteasomal degradation. Plays a role in the maintenance of mitochondrial morphology and promotes mitophagic removal of dysfunctional mitochondria; thereby acts as a protector against apoptosis in response to cellular stress. Negatively regulates vascular smooth muscle contraction, via degradation of the transcriptional activator MYOCD and subsequent loss of transcription of genes involved in vascular smooth muscle contraction. Promotes survival and proliferation of cardiac smooth muscle cells via ubiquitination and degradation of FOXO1, resulting in subsequent repression of FOXO1-mediated transcription of pro-apoptotic genes. Ubiquitinates ICER-type isoforms of CREM and targets them for proteasomal degradation, thereby acts as a positive effector of MAPK/ERK-mediated inhibition of apoptosis in cardiomyocytes. Inhibits lipopolysaccharide-induced apoptosis and hypertrophy in cardiomyocytes, via ubiquitination and subsequent proteasomal degradation of NFATC3. Collaborates with ATXN3 in the degradation of misfolded chaperone substrates: ATXN3 restricting the length of ubiquitin chain attached to STUB1/CHIP substrates and preventing further chain extension. Ubiquitinates NOS1 in concert with Hsp70 and Hsp40. Modulates the activity of several chaperone complexes, including Hsp70, Hsc70 and Hsp90. Ubiquitinates CHRNA3 targeting it for endoplasmic reticulum-associated degradation in cortical neurons, as part of the STUB1-VCP-UBXN2A complex. Ubiquitinates and promotes ESR1 proteasomal degradation in response to age-related circulating estradiol (17-beta-estradiol/E2) decline, thereby promotes neuronal apoptosis in response to ischemic reperfusion injury. Mediates transfer of non-canonical short ubiquitin chains to HSPA8 that have no effect on HSPA8 degradation. Mediates polyubiquitination of DNA polymerase beta (POLB) at 'Lys-41', 'Lys-61' and 'Lys-81', thereby playing a role in base-excision repair: catalyzes polyubiquitination by amplifying the HUWE1/ARF-BP1-dependent monoubiquitination and leading to POLB-degradation by the proteasome. Mediates polyubiquitination of CYP3A4. Ubiquitinates EPHA2 and may regulate the receptor stability and activity through proteasomal degradation. Acts as a co-chaperone for HSPA1A and HSPA1B chaperone proteins and promotes ubiquitin-mediated protein degradation. Negatively regulates the suppressive function of regulatory T-cells (Treg) during inflammation by mediating the ubiquitination and degradation of FOXP3 in a HSPA1A/B-dependent manner. Catalyzes monoubiquitination of SIRT6, preventing its degradation by the proteasome. Likely mediates polyubiquitination and down-regulates plasma membrane expression of PD-L1/CD274, an immune inhibitory ligand critical for immune tolerance to self and antitumor immunity. Negatively regulates TGF-beta signaling by modulating the basal level of SMAD3 via ubiquitin-mediated degradation. Plays a role in the degradation of TP53. Mediates ubiquitination of RIPK3 leading to its subsequent proteasome-dependent degradation. May regulate myosin assembly in striated muscles together with UBE4B and VCP/p97 by targeting myosin chaperone UNC45B for proteasomal degradation. Ubiquitinates PPARG in macrophages playing a role in M2 macrophages polarization and angiogenesis. This chain is E3 ubiquitin-protein ligase CHIP, found in Homo sapiens (Human).